Reading from the N-terminus, the 577-residue chain is Probable L-gulonolactone oxidase 4 (577 aa).

The N-terminal stretch at 1 to 17 (MSFWLSLIFCFFTFASS) is a signal peptide. In terms of domain architecture, FAD-binding PCMH-type spans 46 to 228 (SICKAAKVEY…SQVTFELQPM (183 aa)).

Belongs to the oxygen-dependent FAD-linked oxidoreductase family. The cofactor is FAD.

It catalyses the reaction L-gulono-1,4-lactone + O2 = L-ascorbate + H2O2 + H(+). It functions in the pathway cofactor biosynthesis; L-ascorbate biosynthesis. Functionally, may be involved in the biosynthesis of ascorbic acid. This is Probable L-gulonolactone oxidase 4 from Arabidopsis thaliana (Mouse-ear cress).